The primary structure comprises 420 residues: Transcription factor bHLH89 (420 aa).

The tract at residues 196-216 (EENNNLDDGLNRKGRGSKKRK) is disordered. Residues 207 to 216 (RKGRGSKKRK) are compositionally biased toward basic residues. Residues 212–261 (SKKRKIFPTERERRVHFKDRFGDLKNLIPNPTKNDRASIVGEAIDYIKEL) form the bHLH domain.

As to quaternary structure, homodimer. As to expression, flowers.

Its subcellular location is the nucleus. The chain is Transcription factor bHLH89 (BHLH89) from Arabidopsis thaliana (Mouse-ear cress).